Reading from the N-terminus, the 445-residue chain is D-serine transporter DsdX (445 aa).

The Cytoplasmic portion of the chain corresponds to 1–4 (MHSQ). The chain crosses the membrane as a helical span at residues 5-25 (IWVVSTLLISIVLIVLTIVKF). Over 26–28 (KFH) the chain is Periplasmic. A helical transmembrane segment spans residues 29 to 49 (PFLALLLASFFVGTMMGMGPL). Over 50-56 (DMVNAIE) the chain is Cytoplasmic. The helical transmembrane segment at 57-77 (SGIGGTLGFLAAVIGLGTILG) threads the bilayer. Residues 78–105 (KMMEVSGAAERIGLTLQRCRWLSVDVIM) are Periplasmic-facing. The helical transmembrane segment at 106–126 (VLVGLICGITLFVEVGVVLLI) threads the bilayer. At 127 to 139 (PLAFSIAKKTNTS) the chain is on the cytoplasmic side. The chain crosses the membrane as a helical span at residues 140–160 (LLKLAIPLCTALMAVHCVVPP). Residues 161 to 177 (HPAALYVANKLGADIGS) lie on the Periplasmic side of the membrane. The helical transmembrane segment at 178–198 (VIVYGLLVGLMASLIGGPLFL) threads the bilayer. At 199–223 (KFLGQRLPFKPVPTEFADLKVRDEK) the chain is on the cytoplasmic side. A helical membrane pass occupies residues 224–244 (TLPSLGATLFTILLPIALMLV). At 245-257 (KTIAELNMARESG) the chain is on the periplasmic side. The helical transmembrane segment at 258 to 278 (LYILVEFIGNPITAMFIAVFV) threads the bilayer. Residues 279 to 301 (AYYVLGIRQHMSMGTMLTHTENG) are Cytoplasmic-facing. Residues 302 to 322 (FGSIANILLIIGAGGAFNAIL) traverse the membrane as a helical segment. At 323 to 342 (KSSSLADTLAVILSNMHMHP) the chain is on the periplasmic side. Transmembrane regions (helical) follow at residues 343–363 (ILLA…ATVA), 364–384 (MMGA…ISPE), and 385–405 (IIAI…DSLF). Residues 406–424 (WLVKQYCGATLNETFKYYT) lie on the Cytoplasmic side of the membrane. The chain crosses the membrane as a helical span at residues 425-445 (TATFIASVVALAGTFLLSFII).

It belongs to the GntP permease family.

The protein localises to the cell inner membrane. In terms of biological role, a D-serine-specific transporter, may function as a H(+) symporter. In Escherichia coli (strain K12), this protein is D-serine transporter DsdX.